The chain runs to 647 residues: Serine/threonine-protein kinase PLK3 (647 aa).

The segment at M1–P56 is disordered. Pro residues predominate over residues S20–S31. The Protein kinase domain maps to Y62–F314. ATP is bound by residues L68 to C76 and K91. Residue D185 is the Proton acceptor of the active site. POLO box domains are found at residues W464–Q542 and L563–P646.

The protein belongs to the protein kinase superfamily. Ser/Thr protein kinase family. CDC5/Polo subfamily. In terms of assembly, interacts with GOLGB1. Interacts (via the POLO-box domain) with CIB1; leading to inhibit PLK3 kinase activity. In terms of processing, phosphorylated in an ATM-dependent manner following DNA damage. Phosphorylated as cells enter mitosis and dephosphorylated as cells exit mitosis. As to expression, constitutively expressed in post-mitotic neurons.

The protein localises to the cell projection. Its subcellular location is the dendrite. The protein resides in the cytoplasm. It localises to the nucleus. It is found in the nucleolus. The protein localises to the golgi apparatus. Its subcellular location is the cytoskeleton. The protein resides in the microtubule organizing center. It localises to the centrosome. The catalysed reaction is L-seryl-[protein] + ATP = O-phospho-L-seryl-[protein] + ADP + H(+). The enzyme catalyses L-threonyl-[protein] + ATP = O-phospho-L-threonyl-[protein] + ADP + H(+). Functionally, serine/threonine-protein kinase involved in cell cycle regulation, response to stress and Golgi disassembly. Polo-like kinases act by binding and phosphorylating proteins that are already phosphorylated on a specific motif recognized by the POLO box domains. Phosphorylates ATF2, BCL2L1, CDC25A, CDC25C, CHEK2, HIF1A, JUN, p53/TP53, p73/TP73, PTEN, TOP2A and VRK1. Involved in cell cycle regulation: required for entry into S phase and cytokinesis. Phosphorylates BCL2L1, leading to regulate the G2 checkpoint and progression to cytokinesis during mitosis. Plays a key role in response to stress: rapidly activated upon stress stimulation, such as ionizing radiation, reactive oxygen species (ROS), hyperosmotic stress, UV irradiation and hypoxia. Involved in DNA damage response and G1/S transition checkpoint by phosphorylating CDC25A, p53/TP53 and p73/TP73. Phosphorylates p53/TP53 in response to reactive oxygen species (ROS), thereby promoting p53/TP53-mediated apoptosis. Phosphorylates CHEK2 in response to DNA damage, promoting the G2/M transition checkpoint. Phosphorylates the transcription factor p73/TP73 in response to DNA damage, leading to inhibit p73/TP73-mediated transcriptional activation and pro-apoptotic functions. Phosphorylates HIF1A and JUN is response to hypoxia. Phosphorylates ATF2 following hyperosmotic stress in corneal epithelium. Also involved in Golgi disassembly during the cell cycle: part of a MEK1/MAP2K1-dependent pathway that induces Golgi fragmentation during mitosis by mediating phosphorylation of VRK1. May participate in endomitotic cell cycle, a form of mitosis in which both karyokinesis and cytokinesis are interrupted and is a hallmark of megakaryocyte differentiation, via its interaction with CIB1. This chain is Serine/threonine-protein kinase PLK3 (Plk3), found in Rattus norvegicus (Rat).